A 280-amino-acid chain; its full sequence is Tobamovirus multiplication protein 2A (280 aa).

At 1–13 (MACRGCLECLLKL) the chain is on the cytoplasmic side. A helical transmembrane segment spans residues 14–34 (LNFLLAVAGLGMIGYGIYLFV). Topologically, residues 35 to 78 (EYKRVTDNSVTFDLTNGDQSYVSFGRPILMAVSLSSNIFDNLPK) are extracellular. The chain crosses the membrane as a helical span at residues 79–99 (AWFIYLFIGIGVALFVISCCG). Over 100–113 (CVGTCSRSVCCLSC) the chain is Cytoplasmic. Residues 114–134 (YSLLLILLILVELGFAAFIFF) form a helical membrane-spanning segment. At 135 to 162 (DNSWRDELPSDRTGNFDTIYNFLRENWK) the chain is on the extracellular side. Residues 163-183 (IVRWVALGAVVFEALLFLLAL) form a helical membrane-spanning segment. At 184–280 (MVRAANTPAE…NEEKGRCTIM (97 aa)) the chain is on the cytoplasmic side. Phosphoserine is present on residues Ser196 and Ser233. Positions 258–280 (SESHRFQQMPAQPNEEKGRCTIM) are disordered. Residues 271–280 (NEEKGRCTIM) show a composition bias toward basic and acidic residues.

The protein belongs to the tetraspanin (TM4SF) family. As to quaternary structure, homodimer. Constituent of tobamovirus replication complex. Interacts with TOM1. As to expression, expressed in rosette leaves.

It localises to the vacuole membrane. Functionally, necessary for the efficient intracellular multiplication of tobamoviruses, being a component of the replication complex. The polypeptide is Tobamovirus multiplication protein 2A (TOM2A) (Arabidopsis thaliana (Mouse-ear cress)).